A 116-amino-acid polypeptide reads, in one-letter code: Peptidyl-tRNA hydrolase (116 aa).

This sequence belongs to the PTH2 family.

The protein localises to the cytoplasm. It carries out the reaction an N-acyl-L-alpha-aminoacyl-tRNA + H2O = an N-acyl-L-amino acid + a tRNA + H(+). In terms of biological role, the natural substrate for this enzyme may be peptidyl-tRNAs which drop off the ribosome during protein synthesis. This chain is Peptidyl-tRNA hydrolase, found in Methanococcus vannielii (strain ATCC 35089 / DSM 1224 / JCM 13029 / OCM 148 / SB).